Consider the following 453-residue polypeptide: Ribose 1,5-bisphosphate phosphokinase PhnN (453 aa).

The segment at 1-21 is disordered; it reads MHGSTGFVQGTRPAGDQADPL. The unknown stretch occupies residues 1-271; it reads MHGSTGFVQG…SGQGERASLP (271 aa). Residues 272–453 form a ribose 1,5-bisphosphokinase region; sequence HSGRIFFCVG…KLLDILRQAK (182 aa).

The protein in the C-terminal section; belongs to the ribose 1,5-bisphosphokinase family.

The enzyme catalyses alpha-D-ribose 1,5-bisphosphate + ATP = 5-phospho-alpha-D-ribose 1-diphosphate + ADP. It functions in the pathway metabolic intermediate biosynthesis; 5-phospho-alpha-D-ribose 1-diphosphate biosynthesis; 5-phospho-alpha-D-ribose 1-diphosphate from D-ribose 5-phosphate (route II): step 3/3. Functionally, catalyzes the phosphorylation of ribose 1,5-bisphosphate to 5-phospho-D-ribosyl alpha-1-diphosphate (PRPP). The sequence is that of Ribose 1,5-bisphosphate phosphokinase PhnN (phnN) from Janthinobacterium sp. (strain Marseille) (Minibacterium massiliensis).